Consider the following 191-residue polypeptide: Nucleoside triphosphate pyrophosphatase (191 aa).

Catalysis depends on Asp-70, which acts as the Proton acceptor.

Belongs to the Maf family. Requires a divalent metal cation as cofactor.

Its subcellular location is the cytoplasm. It carries out the reaction a ribonucleoside 5'-triphosphate + H2O = a ribonucleoside 5'-phosphate + diphosphate + H(+). The enzyme catalyses a 2'-deoxyribonucleoside 5'-triphosphate + H2O = a 2'-deoxyribonucleoside 5'-phosphate + diphosphate + H(+). Its function is as follows. Nucleoside triphosphate pyrophosphatase. May have a dual role in cell division arrest and in preventing the incorporation of modified nucleotides into cellular nucleic acids. This is Nucleoside triphosphate pyrophosphatase from Synechococcus sp. (strain WH7803).